The primary structure comprises 205 residues: LIM domain-containing protein PLIM2b (205 aa).

2 consecutive LIM zinc-binding domains span residues 8 to 68 (DKCN…LFKE) and 102 to 162 (DKCA…LFME). Residues 177-205 (RTASGNTLPPEPTEDVAVEAKEENGVSES) form a disordered region. Positions 194–205 (VEAKEENGVSES) are enriched in basic and acidic residues.

Interacts with F-actin. Predominantly expressed in flowers and in pollen grains. Detected in vasculature and roots.

Its subcellular location is the cytoplasm. The protein localises to the cytoskeleton. Its function is as follows. Binds to actin filaments and promotes cross-linking into thick bundles. Has an actin-stabilizing activity. The actin regulatory activities are inhibited by pH &gt; 6.8 but are [Ca(2+)] independent. This chain is LIM domain-containing protein PLIM2b, found in Arabidopsis thaliana (Mouse-ear cress).